A 459-amino-acid chain; its full sequence is tRNA modification GTPase MnmE (459 aa).

Residues Arg20, Glu85, and Arg124 each contribute to the (6S)-5-formyl-5,6,7,8-tetrahydrofolate site. One can recognise a TrmE-type G domain in the interval 221–380 (GISTVIIGRP…LEEAIQSLFF (160 aa)). Residue Asn231 coordinates K(+). Residues 231–236 (NVGKSS), 250–256 (TDIPGTT), and 275–278 (DTAG) each bind GTP. Ser235 contacts Mg(2+). K(+) is bound by residues Thr250, Ile252, and Thr255. Thr256 contributes to the Mg(2+) binding site. Lys459 contributes to the (6S)-5-formyl-5,6,7,8-tetrahydrofolate binding site.

It belongs to the TRAFAC class TrmE-Era-EngA-EngB-Septin-like GTPase superfamily. TrmE GTPase family. As to quaternary structure, homodimer. Heterotetramer of two MnmE and two MnmG subunits. Requires K(+) as cofactor.

The protein resides in the cytoplasm. Functionally, exhibits a very high intrinsic GTPase hydrolysis rate. Involved in the addition of a carboxymethylaminomethyl (cmnm) group at the wobble position (U34) of certain tRNAs, forming tRNA-cmnm(5)s(2)U34. This Bacillus licheniformis (strain ATCC 14580 / DSM 13 / JCM 2505 / CCUG 7422 / NBRC 12200 / NCIMB 9375 / NCTC 10341 / NRRL NRS-1264 / Gibson 46) protein is tRNA modification GTPase MnmE.